Consider the following 208-residue polypeptide: Putative thymidylate kinase (208 aa).

The segment at 12–19 (GIDGTGTS) is defective ATP-binding.

The protein belongs to the thymidylate kinase family.

It carries out the reaction dTMP + ATP = dTDP + ADP. The polypeptide is Putative thymidylate kinase (tmk) (Treponema pallidum (strain Nichols)).